Consider the following 248-residue polypeptide: ATP synthase subunit a, chloroplastic (248 aa).

The next 5 membrane-spanning stretches (helical) occupy residues 35–55 (GQVF…SFLG), 94–114 (VPYI…GALI), 133–153 (INTT…AGLS), 202–222 (VFTL…GLFA), and 224–244 (SIQA…AMEG).

It belongs to the ATPase A chain family. F-type ATPases have 2 components, CF(1) - the catalytic core - and CF(0) - the membrane proton channel. CF(1) has five subunits: alpha(3), beta(3), gamma(1), delta(1), epsilon(1). CF(0) has four main subunits: a, b, b' and c.

It is found in the plastid. The protein resides in the chloroplast thylakoid membrane. Functionally, key component of the proton channel; it plays a direct role in the translocation of protons across the membrane. This Porphyra purpurea (Red seaweed) protein is ATP synthase subunit a, chloroplastic.